We begin with the raw amino-acid sequence, 27 residues long: Urumin (27 aa).

As to expression, expressed by the skin glands.

It localises to the secreted. Functionally, amphibian peptide that shows viricidal activity against human H1N1 influenza A virus. It specifically targets the conserved stalk region of H1 hemagglutinin, and acts by actively destroying influenza virions. It shows a reduced activity on human H3N2 influenza A virus and no activity against other viruses (HIV, SIV, HSV-II, hepatitis C, Ebola, Zika, and Dengue viruses). In vivo, the peptide also protects mice infected with mouse-adapted influenza virus from lethal influenza infection. The peptide synthesized in D-amino acids is inactive. In Hydrophylax bahuvistara (Wide-spread fungoid frog), this protein is Urumin.